Consider the following 182-residue polypeptide: MSSYSDFSQQLKTAGIALSAAELHGFLTGLICGGIHDQSWQPLLFQFTNENHAYPTALLQEVTQIQQHISKKLADIDGFDFELWLPENEDDVFTRADALSEWTNHFLLGLGLAQPKLDKEKGDIGEAIDDLHDICQLGYDESDDKEELSEALEEIIEYVRTLACLLFTHFQPQLPEQKPVLH.

The protein belongs to the UPF0149 family.

This is UPF0149 protein PM1723 from Pasteurella multocida (strain Pm70).